Here is a 528-residue protein sequence, read N- to C-terminus: Dihydromonacolin L monooxygenase LovA (528 aa).

Topologically, residues M1–H23 are cytoplasmic. Residues G24–L44 form a helical; Signal-anchor for type II membrane protein membrane-spanning segment. The Lumenal portion of the chain corresponds to C45–L528. A glycan (N-linked (GlcNAc...) asparagine) is linked at N399. Residue C465 coordinates heme.

The protein belongs to the cytochrome P450 family. Heme is required as a cofactor.

The protein resides in the membrane. Its subcellular location is the endoplasmic reticulum membrane. The enzyme catalyses dihydromonacolin L carboxylate + reduced [NADPH--hemoprotein reductase] + O2 = monacolin L carboxylate + oxidized [NADPH--hemoprotein reductase] + 2 H2O + H(+). It catalyses the reaction monacolin L carboxylate + reduced [NADPH--hemoprotein reductase] + O2 = monacolin J carboxylate + oxidized [NADPH--hemoprotein reductase] + H2O + H(+). It participates in polyketide biosynthesis; lovastatin biosynthesis. In terms of biological role, dihydromonacolin L monooxygenase; part of the gene cluster that mediates the biosynthesis of lovastatin (also known as mevinolin, mevacor or monacolin K), a hypolipidemic inhibitor of (3S)-hydroxymethylglutaryl-coenzyme A (HMG-CoA) reductase (HMGR). The first step in the biosynthesis of lovastatin is the production of dihydromonacolin L acid by the lovastatin nonaketide synthase lovB and the trans-acting enoyl reductase lovC via condensation of one acetyl-CoA unit and 8 malonyl-CoA units. Dihydromonacolin L acid is released from lovB by the thioesterase lovG. Next, dihydromonacolin L acid is oxidized by the dihydromonacolin L monooxygenase lovA twice to form monacolin J acid. The 2-methylbutyrate moiety of lovastatin is synthesized by the lovastatin diketide synthase lovF via condensation of one acetyl-CoA unit and one malonyl-CoA unit. Finally, the covalent attachment of this moiety to monacolin J acid is catalyzed by the transesterase lovD to yield lovastatin. LovD has broad substrate specificity and can also convert monacolin J to simvastatin using alpha-dimethylbutanoyl-S-methyl-3-mercaptopropionate (DMB-S-MMP) as the thioester acyl donor, and can also catalyze the reverse reaction and function as hydrolase in vitro. LovD has much higher activity with LovF-bound 2-methylbutanoate than with free diketide substrates. The chain is Dihydromonacolin L monooxygenase LovA from Aspergillus terreus (strain NIH 2624 / FGSC A1156).